Reading from the N-terminus, the 138-residue chain is D-ribose pyranase (138 aa).

The active-site Proton donor is the H20. Substrate is bound by residues D28, H105, and 127–129 (YAN).

Belongs to the RbsD / FucU family. RbsD subfamily. As to quaternary structure, homodecamer.

Its subcellular location is the cytoplasm. It carries out the reaction beta-D-ribopyranose = beta-D-ribofuranose. The protein operates within carbohydrate metabolism; D-ribose degradation; D-ribose 5-phosphate from beta-D-ribopyranose: step 1/2. Catalyzes the interconversion of beta-pyran and beta-furan forms of D-ribose. The polypeptide is D-ribose pyranase (Psychromonas ingrahamii (strain DSM 17664 / CCUG 51855 / 37)).